The primary structure comprises 919 residues: Isoleucine--tRNA ligase (919 aa).

The 'HIGH' region signature appears at 57–67 (PYANGHTHIGH). Glu-569 is an L-isoleucyl-5'-AMP binding site. A 'KMSKS' region motif is present at residues 610-614 (KMSKS). An ATP-binding site is contributed by Lys-613. Zn(2+) contacts are provided by Cys-895, Cys-898, Cys-910, and Cys-913.

This sequence belongs to the class-I aminoacyl-tRNA synthetase family. IleS type 1 subfamily. In terms of assembly, monomer. Requires Zn(2+) as cofactor.

It is found in the cytoplasm. The catalysed reaction is tRNA(Ile) + L-isoleucine + ATP = L-isoleucyl-tRNA(Ile) + AMP + diphosphate. Functionally, catalyzes the attachment of isoleucine to tRNA(Ile). As IleRS can inadvertently accommodate and process structurally similar amino acids such as valine, to avoid such errors it has two additional distinct tRNA(Ile)-dependent editing activities. One activity is designated as 'pretransfer' editing and involves the hydrolysis of activated Val-AMP. The other activity is designated 'posttransfer' editing and involves deacylation of mischarged Val-tRNA(Ile). This is Isoleucine--tRNA ligase from Sulfurimonas denitrificans (strain ATCC 33889 / DSM 1251) (Thiomicrospira denitrificans (strain ATCC 33889 / DSM 1251)).